A 1090-amino-acid polypeptide reads, in one-letter code: Exocyst complex component SEC5B (1090 aa).

Positions 1 to 12 are enriched in acidic residues; that stretch reads MSSSDDLDEDEL. The disordered stretch occupies residues 1–126; that stretch reads MSSSDDLDED…ARKEDDRAWD (126 aa). Residues 23 to 46 are compositionally biased toward polar residues; that stretch reads RDVTYQKPPSANSRKPVTNLVQQP. Residues 52–62 show a composition bias toward low complexity; the sequence is AAAPPSKGGAK. The span at 96-109 shows a compositional bias: gly residues; the sequence is GGGGDGGGGRGRGG. The span at 110 to 126 shows a compositional bias: basic and acidic residues; it reads SGKERGRARKEDDRAWD. S179 carries the post-translational modification Phosphoserine. Positions 486–502 are enriched in polar residues; it reads VQLSDDTSSMEDNQVQV. Disordered regions lie at residues 486–511, 984–1013, and 1055–1090; these read VQLS…ESAR, ETVE…QSSV, and PVAK…PRRR. The segment covering 999 to 1010 has biased composition (basic and acidic residues); sequence RGSEDAISDDKQ. Residues 1062–1071 are compositionally biased toward polar residues; the sequence is SRTSTDSPSR.

This sequence belongs to the SEC5 family. The exocyst complex is composed of SEC3, SEC5, SEC6, SEC8, SEC10, EXO70A1 and EXO84B.

Functionally, component of the exocyst complex involved in the docking of exocytic vesicles with fusion sites on the plasma membrane during regulated or polarized secretion. Involved in polarized cell growth and organ morphogenesis. During cytokinesis, involved in cell plate initiation, cell plate maturation and formation of new primary cell wall. The chain is Exocyst complex component SEC5B (SEC5B) from Arabidopsis thaliana (Mouse-ear cress).